A 519-amino-acid polypeptide reads, in one-letter code: Probable anion transporter 3, chloroplastic (519 aa).

Residues 1-76 (MAPPGQLLPL…PPPPATSLPG (76 aa)) constitute a chloroplast transit peptide. The span at 56–72 (LPFAPPRRLSRPPPPAT) shows a compositional bias: pro residues. The tract at residues 56 to 82 (LPFAPPRRLSRPPPPATSLPGASPGGG) is disordered. 12 consecutive transmembrane segments (helical) span residues 100–120 (VAAMLGLALALCNADRVVMSV), 138–158 (VVQSSFLWGYLVSPIIGGALV), 166–186 (VMAYGVALWSLATFLSPWAAA), 188–208 (SLWLFLSTRVLLGMAEGVALP), 229–249 (IAMAGFQLGNTIGLLLSPIIM), 253–273 (GIFGPFVIFGLFGFLWVLVWI), 326–346 (WALISANAMHSWGYFVILSWM), 362–382 (AWFSALPWVMMAVLGYVAGVV), 403–423 (IGFVGPGVALLGLNAAKSPVI), 424–444 (ASAWLTIAVGLKSFGHSGFLV), 460–480 (MSNTAGTFAAILGTVGAGFFV), and 488–508 (GFLILTSLLYFSSTLFWDIFA).

The protein belongs to the major facilitator superfamily. Sodium/anion cotransporter (TC 2.A.1.14) family.

The protein resides in the plastid. The protein localises to the chloroplast membrane. In terms of biological role, probable anion transporter. This is Probable anion transporter 3, chloroplastic (PHT4;3) from Oryza sativa subsp. japonica (Rice).